The chain runs to 444 residues: MATSRAALCAVAVVCVVLAAACAPARAIHVGTPAAALFEEFKRTYGRAYETLAEEQQRLANFERNLELMREHQARNPHAQFGITKFFDLSEAEFAARYLNGAAYFAAAKRHAAQHYRKARADLSAVPDAVDWREKGAVTPVKDQGACGSCWAFSAVGNIEGQWYLAGHELVSLSEQQLVSCDDMNDGCDGGLMLQAFDWLLQNTNGHLHTEDSYPYVSGNGYVPECSNSSEELVVGAQIDGHVLIGSSEKAMAAWLAKNGPIAIALDASSFMSYKSGVLTACIGKQLNHGVLLVGYDMTGEVPYWVIKNSWGGDWGEQGYVRVVMGVNACLLSEYPVSAHVRESAAPGTSTSSETPAPRPVMVEQVICFDKNCTQGCRKTLIKANECHKNGGGGASMIKCSPQKVTMCTYSNEFCVGGGLCFETPDGKCAPYFLGSIMNTCHYT.

The segment at residues 1-19 (MATSRAALCAVAVVCVVLA) is a signal peptide (or 27). A propeptide spans 20-124 (AACAPARAIH…HYRKARADLS (105 aa)) (activation peptide). Cysteine 147 and cysteine 188 are disulfide-bonded. Cysteine 150 is a catalytic residue. An N-linked (GlcNAc...) asparagine glycan is attached at asparagine 228. Active-site residues include histidine 289 and asparagine 309. Asparagine 372 carries an N-linked (GlcNAc...) asparagine glycan.

Belongs to the peptidase C1 family.

The protein resides in the lysosome. Functionally, the cysteine proteinases have a potential role in host-parasite interaction and virulence. This Leishmania pifanoi protein is Cysteine proteinase 2 (CYS2).